Here is a 456-residue protein sequence, read N- to C-terminus: uncharacterized protein (456 aa).

The TRAM domain occupies 2-60 (AMRKGKEYELNIEEIEFPSMGIAYHEGLKVYVKHGIPGQKVLARITTKKKDHAKGKIIE). [4Fe-4S] cluster-binding residues include C73, C79, C82, and C162. S-adenosyl-L-methionine contacts are provided by Q288, Y317, E338, and D383. Catalysis depends on C410, which acts as the Nucleophile.

The protein belongs to the class I-like SAM-binding methyltransferase superfamily. RNA M5U methyltransferase family.

This is an uncharacterized protein from Clostridium tetani (strain Massachusetts / E88).